The following is a 657-amino-acid chain: Transmembrane protein 232 (657 aa).

A run of 2 helical transmembrane segments spans residues 168 to 188 and 353 to 373; these read IGYLVFLRLFIFFLHGHLESF and WAWNVVYIYTVILAEICLYAA.

It localises to the membrane. In terms of biological role, plays a critical role for male fertility and sperm motility by regulating sperm cytoplasm removal and maintaining axoneme integrity. The chain is Transmembrane protein 232 (TMEM232) from Homo sapiens (Human).